Reading from the N-terminus, the 492-residue chain is Transmembrane protein 104 homolog (492 aa).

Residues 1-17 (MQSNTDSSTSGTYSQTV) lie on the Cytoplasmic side of the membrane. The helical transmembrane segment at 18–38 (GLLYVFNLIVGTGALALPKAF) threads the bilayer. Residues 39–44 (QTAGWL) lie on the Extracellular side of the membrane. The helical transmembrane segment at 45–65 (LSITLLTFSAFMSYVAATFVI) threads the bilayer. The Cytoplasmic segment spans residues 66 to 113 (EALSVANAVLSKKRRVEYDDVVVADGPSTFEISKKVEVSEMASMFLSK). The chain crosses the membrane as a helical span at residues 114 to 134 (VSLVFSYFAIIIYLFGDLAIY). Over 135–176 (STTVPKSAMNIVCATINASTVKSSDPCHESWPEILTRMTVYR) the chain is Extracellular. An N-linked (GlcNAc...) asparagine glycan is attached at N151. Residues 177 to 197 (FFVIIFVVVVCLPMVIAGITK) form a helical membrane-spanning segment. At 198-209 (TRHIQIMTTLSR) the chain is on the cytoplasmic side. Residues 210–230 (WAAFILMISLATMQLSSDGAA) traverse the membrane as a helical segment. The Extracellular portion of the chain corresponds to 231 to 237 (AHPPAYN). The chain crosses the membrane as a helical span at residues 238 to 258 (FHGFGSLFGCAVYAFMCHHSI). Residues 259–274 (PSLITPMRTKDNVFGK) lie on the Cytoplasmic side of the membrane. Residues 275 to 295 (IALVYGVVGVFYFTLSLTGAF) form a helical membrane-spanning segment. Topologically, residues 296-324 (AFEHVQDIYTLNFFHDGNTSFIYSIIDYF) are extracellular. N313 carries an N-linked (GlcNAc...) asparagine glycan. Residues 325 to 345 (LALFPIITLTSSYPIIALTLI) form a helical membrane-spanning segment. Residues 346 to 392 (NNFNVVKDILCPKVGQENESLLEADSLVEDNDTDDEREARNARNEKS) are Cytoplasmic-facing. Residues 393-413 (VFDVLVPALVLALPTFLSLLT) traverse the membrane as a helical segment. The Extracellular segment spans residues 414 to 415 (DD). A helical membrane pass occupies residues 416–436 (MLLLASITGSFPGVAVQFAIP). Residues 437–466 (CLLVTAARKHARSVLNFPVPRKNNSPFQSP) lie on the Cytoplasmic side of the membrane. The chain crosses the membrane as a helical span at residues 467 to 487 (IWIVLISSWAGFSMIMVLLNL). At 488-492 (VGVKF) the chain is on the extracellular side.

The protein belongs to the TMEM104 family.

It localises to the membrane. The protein is Transmembrane protein 104 homolog of Caenorhabditis elegans.